Reading from the N-terminus, the 305-residue chain is Protoheme IX farnesyltransferase (305 aa).

The next 9 helical transmembrane spans lie at 28–48, 52–72, 101–121, 122–142, 149–169, 174–194, 218–238, 240–260, and 283–303; these read IIEL…QGVP, LVLL…ALNM, LAFG…TVNW, LSAW…TMIL, NIVW…SSVT, WAPV…YWPL, VVAR…LLLT, LGYT…FWLW, and LFHW…VDPF.

It belongs to the UbiA prenyltransferase family. Protoheme IX farnesyltransferase subfamily.

The protein resides in the cell membrane. The enzyme catalyses heme b + (2E,6E)-farnesyl diphosphate + H2O = Fe(II)-heme o + diphosphate. Its pathway is porphyrin-containing compound metabolism; heme O biosynthesis; heme O from protoheme: step 1/1. Functionally, converts heme B (protoheme IX) to heme O by substitution of the vinyl group on carbon 2 of heme B porphyrin ring with a hydroxyethyl farnesyl side group. The sequence is that of Protoheme IX farnesyltransferase from Streptomyces avermitilis (strain ATCC 31267 / DSM 46492 / JCM 5070 / NBRC 14893 / NCIMB 12804 / NRRL 8165 / MA-4680).